A 212-amino-acid chain; its full sequence is Ras-related protein Rab-15 (212 aa).

The GTP site is built by Ser17, Gly18, Val19, Gly20, Lys21, Thr22, Cys23, Ser35, Ser39, and Thr40. Thr22 is a binding site for Mg(2+). 2 consecutive short sequence motifs (switch) follow at residues 31–45 (NEFHSSHISTIGVDF) and 63–80 (DTAGQERYQTITKQYYRR). 2 residues coordinate Mg(2+): Thr40 and Asp63. Residues Gly66, Asn121, Lys122, Asp124, Ser151, and Ala152 each contribute to the GTP site. A disordered region spans residues 192-212 (ELEEDEGKPEGPANSSKTCWC). 2 S-geranylgeranyl cysteine lipidation sites follow: Cys210 and Cys212. Cys212 bears the Cysteine methyl ester mark.

It belongs to the small GTPase superfamily. Rab family. As to quaternary structure, the GTP bound form of RAB15 interacts with REP15. Interacts (GTP-bound form) with MICAL1, MICAL3, MICALCL, EHBP1 and EHBP1L1. Mg(2+) is required as a cofactor.

It localises to the cell membrane. The catalysed reaction is GTP + H2O = GDP + phosphate + H(+). Regulated by guanine nucleotide exchange factors (GEFs) which promote the exchange of bound GDP for free GTP. Regulated by GTPase activating proteins (GAPs) which increase the GTP hydrolysis activity. Inhibited by GDP dissociation inhibitors (GDIs). The small GTPases Rab are key regulators of intracellular membrane trafficking, from the formation of transport vesicles to their fusion with membranes. Rabs cycle between an inactive GDP-bound form and an active GTP-bound form that is able to recruit to membranes different sets of downstream effectors directly responsible for vesicle formation, movement, tethering and fusion. RAB15 may act in concert with RAB3A in regulating aspects of synaptic vesicle membrane flow within the nerve terminal. The sequence is that of Ras-related protein Rab-15 (RAB15) from Bos taurus (Bovine).